Reading from the N-terminus, the 380-residue chain is MSDKINVWTTSRDSAVCGDIELKKTSTTRLIFRPEIVNNNKNPKASVRGCFIFQKKGRNALWDDYKELDMNKLKAEEWIKLEINSDAMLTLTKEIQKHYAVHEKYGVRYGAFHLFKDNPDIEKLIEMFESNTDLLTQLMEDDKSEALEKTLEWIVTNDNPDKIIDRLKNLKEQDLDQLNTLIGIANLKKVLSVWESNKLTNTSEKFWQSVLKENTWILSQIFSNPTVLINDEAYVGGKTVKNDSGKLVDFLYANPFSKDAVLIEIKTPSTPLITPTEYRTGVYSAHKDLTGAVTQVLTYKTTLQREYQNIDYNNYRQGIKTDFDIITPCCVVIAGMFDTLTDTAHRHSFELYRKELKNVTVITFDELFERVKGLIKLLEG.

Functionally, only component of antiviral defense system Shedu. Expression of Shedu in B.subtilis (strain BEST7003) confers resistance to phages phi105, phi29, rho14 and to a lesser extent to SPP1. May be an endonuclease. The sequence is that of Shedu protein SduA from Bacillus cereus (strain B4264).